Consider the following 502-residue polypeptide: RNA polymerase sigma factor sigA (502 aa).

A chloroplast-targeting transit peptide spans 1-23 (MATAAVIGLNTGKRLLSSSFYHS). The span at 57-71 (YSPSFPSSNRHTQSA) shows a compositional bias: polar residues. The tract at residues 57-92 (YSPSFPSSNRHTQSAKALKESVDVASTEKPWLPNGT) is disordered. The residue at position 170 (T170) is a Phosphothreonine. The short motif at 287-300 (DLVQGGLIGLLRGI) is the Polymerase core binding element. Positions 461 to 480 (WEDISKRIGLSRERVRQVGL) form a DNA-binding region, H-T-H motif.

It belongs to the sigma-70 factor family. In terms of assembly, interacts with SIB1 in chloroplast. Binds to CSK. The phosphorylation of Thr-170 mediated by oxidative conditions of plastoquinone (PQ) changes the promoter specificity, selectively inhibiting the transcription of the psaA gene, which encodes a PS-I protein. Phosphorylation of the holoenzyme occurs in the dark. This phosphorylation in response to plastoquinone redox state modification is mediated by CSK. In terms of tissue distribution, highly expressed in leaves, and to a lesser extent in roots. Expressed in old seedlings (8 days), cotyledons, hypocotyls, leaves, sepals and siliques.

Its subcellular location is the plastid. It localises to the chloroplast. Essential protein. Sigma factors are initiation factors that promote the attachment of plastid-encoded RNA polymerase (PEP) to specific initiation sites and are then released. Controls the transcription of the psaA gene and thus modulates photosystem stoichiometry. Thereby maintains a harmonious electron flow and photosynthetic efficiency. This chain is RNA polymerase sigma factor sigA (SIGA), found in Arabidopsis thaliana (Mouse-ear cress).